A 199-amino-acid polypeptide reads, in one-letter code: Thymidine kinase (199 aa).

Residues 15-22 (GSMFSGKS) and 88-91 (DEVQ) each bind ATP. E89 (proton acceptor) is an active-site residue. Residues C145, C148, C183, and H186 each contribute to the Zn(2+) site.

This sequence belongs to the thymidine kinase family. As to quaternary structure, homotetramer.

Its subcellular location is the cytoplasm. The catalysed reaction is thymidine + ATP = dTMP + ADP + H(+). This chain is Thymidine kinase, found in Staphylococcus aureus (strain USA300).